A 158-amino-acid chain; its full sequence is Trafficking protein particle complex subunit 6B (158 aa).

The protein belongs to the TRAPP small subunits family. BET3 subfamily. In terms of assembly, homodimer. Part of a TRAPP complex. Heterodimer with TRAPPC3. The heterodimer TRAPPC6B-TRAPPC3 interacts with TRAPPC1 likely providing a core for TRAPP complex formation. In terms of tissue distribution, widely expressed. Expressed in lung, heart, liver, spleen, brain and kidney.

Its subcellular location is the golgi apparatus. It is found in the cis-Golgi network. The protein resides in the endoplasmic reticulum. Its function is as follows. Component of a transport protein particle (TRAPP) complex that may function in specific stages of inter-organelle traffic. Specifically involved in the early development of neural circuitry, likely by controlling the frequency and amplitude of intracellular calcium transients implicated in the regulation of neuron differentiation and survival. This is Trafficking protein particle complex subunit 6B from Mus musculus (Mouse).